We begin with the raw amino-acid sequence, 510 residues long: Conditioned medium factor receptor 1 (510 aa).

Residues 1–36 (MDSKYIQKTLSAITEQITKNAAVQKVLDNKFVKEHK) lie on the Cytoplasmic side of the membrane. A helical transmembrane segment spans residues 37-55 (YAAAAATVGLGVVAATTIV). Residues 56-510 (KAVNCEGKRY…QGKKQIKKLD (455 aa)) lie on the Extracellular side of the membrane.

The protein localises to the membrane. Its function is as follows. Receptor for cmfA, that appears to mediate the G-independent cmfA signal transduction. The sequence is that of Conditioned medium factor receptor 1 (cmfB) from Dictyostelium discoideum (Social amoeba).